We begin with the raw amino-acid sequence, 22 residues long: thr operon leader peptide (22 aa).

It belongs to the thr operon leader peptide family.

Functionally, this protein is involved in control of the biosynthesis of threonine. The sequence is that of thr operon leader peptide from Yersinia enterocolitica serotype O:8 / biotype 1B (strain NCTC 13174 / 8081).